A 273-amino-acid polypeptide reads, in one-letter code: Probable branched-chain-amino-acid aminotransferase (273 aa).

An N6-(pyridoxal phosphate)lysine modification is found at K133.

It belongs to the class-IV pyridoxal-phosphate-dependent aminotransferase family. The cofactor is pyridoxal 5'-phosphate.

The catalysed reaction is L-leucine + 2-oxoglutarate = 4-methyl-2-oxopentanoate + L-glutamate. The enzyme catalyses L-isoleucine + 2-oxoglutarate = (S)-3-methyl-2-oxopentanoate + L-glutamate. It catalyses the reaction L-valine + 2-oxoglutarate = 3-methyl-2-oxobutanoate + L-glutamate. It participates in amino-acid biosynthesis; L-isoleucine biosynthesis; L-isoleucine from 2-oxobutanoate: step 4/4. Its pathway is amino-acid biosynthesis; L-leucine biosynthesis; L-leucine from 3-methyl-2-oxobutanoate: step 4/4. It functions in the pathway amino-acid biosynthesis; L-valine biosynthesis; L-valine from pyruvate: step 4/4. Acts on leucine, isoleucine and valine. The polypeptide is Probable branched-chain-amino-acid aminotransferase (ilvE) (Thermotoga maritima (strain ATCC 43589 / DSM 3109 / JCM 10099 / NBRC 100826 / MSB8)).